The primary structure comprises 496 residues: Glutamyl-tRNA(Gln) amidotransferase subunit A (496 aa).

Active-site charge relay system residues include K75 and S150. Residue S174 is the Acyl-ester intermediate of the active site.

The protein belongs to the amidase family. GatA subfamily. As to quaternary structure, heterotrimer of A, B and C subunits.

It catalyses the reaction L-glutamyl-tRNA(Gln) + L-glutamine + ATP + H2O = L-glutaminyl-tRNA(Gln) + L-glutamate + ADP + phosphate + H(+). Its function is as follows. Allows the formation of correctly charged Gln-tRNA(Gln) through the transamidation of misacylated Glu-tRNA(Gln) in organisms which lack glutaminyl-tRNA synthetase. The reaction takes place in the presence of glutamine and ATP through an activated gamma-phospho-Glu-tRNA(Gln). This is Glutamyl-tRNA(Gln) amidotransferase subunit A from Burkholderia cenocepacia (strain HI2424).